Here is a 519-residue protein sequence, read N- to C-terminus: Berghepain-1 (519 aa).

Over 1–32 the chain is Cytoplasmic; that stretch reads MINDIRRINITTSSIESLNENSKYLKRNHKRT. A helical; Signal-anchor for type II membrane protein transmembrane segment spans residues 33 to 53; the sequence is IKICAYAITTFALFFIVVVYF. Over 54–519 the chain is Lumenal; the sequence is KNQTNVNDAN…IGIDVFFPIL (466 aa). Residues N55 and N143 are each glycosylated (N-linked (GlcNAc...) asparagine). 4 disulfides stabilise this stretch: C298-C340, C333-C373, C358-C378, and C427-C508. C301 is an active-site residue. N432 carries an N-linked (GlcNAc...) asparagine glycan. Catalysis depends on residues H433 and N483.

Belongs to the peptidase C1 family.

The protein localises to the membrane. Its function is as follows. Cysteine protease. Required for host hepatocyte-derived merozoite infectivity and to a lesser extent for host erythrocyte-derived merozoite infectivity. This is Berghepain-1 from Plasmodium berghei (strain Anka).